A 198-amino-acid polypeptide reads, in one-letter code: Ribonuclease HII (198 aa).

The region spanning 10–198 (QLVAGVDEVG…PVKRALGLAS (189 aa)) is the RNase H type-2 domain. A divalent metal cation contacts are provided by Asp-16, Glu-17, and Asp-108.

Belongs to the RNase HII family. Mn(2+) serves as cofactor. Mg(2+) is required as a cofactor.

The protein localises to the cytoplasm. It catalyses the reaction Endonucleolytic cleavage to 5'-phosphomonoester.. In terms of biological role, endonuclease that specifically degrades the RNA of RNA-DNA hybrids. The polypeptide is Ribonuclease HII (Escherichia coli O45:K1 (strain S88 / ExPEC)).